A 1160-amino-acid polypeptide reads, in one-letter code: Nck-associated protein 1 homolog (1160 aa).

The protein belongs to the HEM-1/HEM-2 family. Part of a Scar/WAVE complex containing brk1, scrA, abiA, pirA and napA.

Its function is as follows. Involved in regulation of actin and microtubule organization. Involved in cell adhesion. The polypeptide is Nck-associated protein 1 homolog (napA) (Dictyostelium discoideum (Social amoeba)).